The chain runs to 215 residues: ATP phosphoribosyltransferase (215 aa).

It belongs to the ATP phosphoribosyltransferase family. Short subfamily. In terms of assembly, heteromultimer composed of HisG and HisZ subunits.

It localises to the cytoplasm. The enzyme catalyses 1-(5-phospho-beta-D-ribosyl)-ATP + diphosphate = 5-phospho-alpha-D-ribose 1-diphosphate + ATP. The protein operates within amino-acid biosynthesis; L-histidine biosynthesis; L-histidine from 5-phospho-alpha-D-ribose 1-diphosphate: step 1/9. Functionally, catalyzes the condensation of ATP and 5-phosphoribose 1-diphosphate to form N'-(5'-phosphoribosyl)-ATP (PR-ATP). Has a crucial role in the pathway because the rate of histidine biosynthesis seems to be controlled primarily by regulation of HisG enzymatic activity. The protein is ATP phosphoribosyltransferase of Gloeothece citriformis (strain PCC 7424) (Cyanothece sp. (strain PCC 7424)).